The primary structure comprises 267 residues: MPRAFLVKKPCVSTCKRNWSELPDEERGEIYVPVSLGFCPPQPYQEPEPSVAEPPSCPLALDMSLRNSSYSVTPGPCVVAQLPSEDMSRLAGPQSRDHGFLRTKMKVTLGDGPSGDLFTCHICQKAFTYQRMLNRHMKCHNDVKRHLCTYCGKGFNDTFDLKRHVRTHTGVRPYKCSLCDKAFTQRCSLESHLKKIHGVQQKYAYKERRAKLYVCEECGCTSESQEGHVLHLKEHHPDSPLLRKTSKKVAVALQNTVTSLLQGAHHV.

4 consecutive C2H2-type zinc fingers follow at residues 118 to 140 (FTCH…MKCH), 146 to 168 (HLCT…VRTH), 174 to 197 (YKCS…KKIH), and 213 to 235 (YVCE…LKEH).

Its subcellular location is the nucleus. In terms of biological role, putative transcription factor. Involved in hair formation and spermatogenesis. May function in the differentiation and/or maintenance of the urogenital system. In Bos taurus (Bovine), this protein is Putative transcription factor Ovo-like 1 (OVOL1).